A 226-amino-acid chain; its full sequence is Thymidylate kinase (226 aa).

16 to 23 (GIDGAGKT) contributes to the ATP binding site.

It belongs to the thymidylate kinase family.

The enzyme catalyses dTMP + ATP = dTDP + ADP. Phosphorylation of dTMP to form dTDP in both de novo and salvage pathways of dTTP synthesis. This is Thymidylate kinase from Xanthomonas euvesicatoria pv. vesicatoria (strain 85-10) (Xanthomonas campestris pv. vesicatoria).